We begin with the raw amino-acid sequence, 56 residues long: uncharacterized protein (56 aa).

Transmembrane regions (helical) follow at residues 5 to 23 (VLIF…YWIY) and 33 to 55 (ITAG…ILGW).

The protein resides in the cell membrane. This is an uncharacterized protein from Archaeoglobus fulgidus (strain ATCC 49558 / DSM 4304 / JCM 9628 / NBRC 100126 / VC-16).